Reading from the N-terminus, the 335-residue chain is 5-dehydro-2-deoxygluconokinase (335 aa).

The protein belongs to the carbohydrate kinase PfkB family.

The enzyme catalyses 5-dehydro-2-deoxy-D-gluconate + ATP = 6-phospho-5-dehydro-2-deoxy-D-gluconate + ADP + H(+). Its pathway is polyol metabolism; myo-inositol degradation into acetyl-CoA; acetyl-CoA from myo-inositol: step 5/7. Its function is as follows. Catalyzes the phosphorylation of 5-dehydro-2-deoxy-D-gluconate (2-deoxy-5-keto-D-gluconate or DKG) to 6-phospho-5-dehydro-2-deoxy-D-gluconate (DKGP). This chain is 5-dehydro-2-deoxygluconokinase, found in Geobacillus kaustophilus (strain HTA426).